We begin with the raw amino-acid sequence, 351 residues long: Transmembrane and coiled-coil domain-containing protein 5B (351 aa).

Residues 17–214 adopt a coiled-coil conformation; sequence EIPKLEITKQ…WRSSIQSAKT (198 aa). The helical transmembrane segment at 292 to 312 threads the bilayer; that stretch reads IFVVMIFFRLLGYVLFYLQYI.

The protein belongs to the TMCO5 family.

The protein resides in the membrane. This chain is Transmembrane and coiled-coil domain-containing protein 5B (TMCO5B), found in Bos taurus (Bovine).